We begin with the raw amino-acid sequence, 171 residues long: Endoribonuclease YbeY (171 aa).

Residues His-115, His-119, and His-125 each contribute to the Zn(2+) site.

This sequence belongs to the endoribonuclease YbeY family. Zn(2+) serves as cofactor.

Its subcellular location is the cytoplasm. In terms of biological role, single strand-specific metallo-endoribonuclease involved in late-stage 70S ribosome quality control and in maturation of the 3' terminus of the 16S rRNA. In Tropheryma whipplei (strain TW08/27) (Whipple's bacillus), this protein is Endoribonuclease YbeY.